A 210-amino-acid polypeptide reads, in one-letter code: dITP/XTP pyrophosphatase (210 aa).

19–24 contacts substrate; that stretch reads SNNPGK. The Mg(2+) site is built by D51 and D80. Residue D80 is the Proton acceptor of the active site. Residues S81, 166–169, K189, and 194–195 contribute to the substrate site; these read FGYD and HR.

Belongs to the HAM1 NTPase family. Homodimer. The cofactor is Mg(2+).

The enzyme catalyses XTP + H2O = XMP + diphosphate + H(+). The catalysed reaction is dITP + H2O = dIMP + diphosphate + H(+). It carries out the reaction ITP + H2O = IMP + diphosphate + H(+). Pyrophosphatase that catalyzes the hydrolysis of nucleoside triphosphates to their monophosphate derivatives, with a high preference for the non-canonical purine nucleotides XTP (xanthosine triphosphate), dITP (deoxyinosine triphosphate) and ITP. Seems to function as a house-cleaning enzyme that removes non-canonical purine nucleotides from the nucleotide pool, thus preventing their incorporation into DNA/RNA and avoiding chromosomal lesions. In Burkholderia mallei (strain ATCC 23344), this protein is dITP/XTP pyrophosphatase.